The following is a 64-amino-acid chain: Large ribosomal subunit protein bL35 (64 aa).

Belongs to the bacterial ribosomal protein bL35 family.

The polypeptide is Large ribosomal subunit protein bL35 (Chlorobium limicola (strain DSM 245 / NBRC 103803 / 6330)).